The primary structure comprises 339 residues: Anthranilate phosphoribosyltransferase (339 aa).

Residues glycine 81, 84-85 (GD), serine 89, 91-94 (NVSS), 109-117 (KHGNRALSS), and alanine 121 contribute to the 5-phospho-alpha-D-ribose 1-diphosphate site. Residue glycine 81 coordinates anthranilate. A Mg(2+)-binding site is contributed by serine 93. Asparagine 112 is an anthranilate binding site. Residue arginine 167 coordinates anthranilate. Aspartate 225 and glutamate 226 together coordinate Mg(2+).

The protein belongs to the anthranilate phosphoribosyltransferase family. Homodimer. Requires Mg(2+) as cofactor.

The enzyme catalyses N-(5-phospho-beta-D-ribosyl)anthranilate + diphosphate = 5-phospho-alpha-D-ribose 1-diphosphate + anthranilate. Its pathway is amino-acid biosynthesis; L-tryptophan biosynthesis; L-tryptophan from chorismate: step 2/5. In terms of biological role, catalyzes the transfer of the phosphoribosyl group of 5-phosphorylribose-1-pyrophosphate (PRPP) to anthranilate to yield N-(5'-phosphoribosyl)-anthranilate (PRA). The chain is Anthranilate phosphoribosyltransferase from Brucella abortus (strain S19).